The chain runs to 530 residues: Histone-arginine methyltransferase CARMER (530 aa).

Residues 141–450 (ASQYFQFYGY…QSYDVTIDLH (310 aa)) form the SAM-dependent MTase PRMT-type domain. Residues Gln-154, Arg-163, Gly-187, Glu-209, Glu-238, and Thr-266 each coordinate S-adenosyl-L-methionine. Residue Arg-501 is modified to Asymmetric dimethylarginine; by autocatalysis.

This sequence belongs to the class I-like SAM-binding methyltransferase superfamily. Protein arginine N-methyltransferase family. As to quaternary structure, homodimer. The dimethylated protein is the major form.

It localises to the cytoplasm. It is found in the nucleus. It carries out the reaction L-arginyl-[protein] + 2 S-adenosyl-L-methionine = N(omega),N(omega)-dimethyl-L-arginyl-[protein] + 2 S-adenosyl-L-homocysteine + 2 H(+). In terms of biological role, methylates (mono- and asymmetric dimethylation) the guanidino nitrogens of arginyl residues in proteins. May methylate histone H3 at 'Arg-17' and activate transcription via chromatin remodeling. The polypeptide is Histone-arginine methyltransferase CARMER (Art4) (Drosophila simulans (Fruit fly)).